The sequence spans 919 residues: Synphilin-1 (919 aa).

Disordered stretches follow at residues 80–99, 108–140, and 287–313; these read SPLKHQPETLENNESDDQKN, GGESDLGPQPQELGPGDGVGGPPGKSSEPSTSL, and SSAAESKPEEQVSGLNRTSSQGPEERS. The span at 299 to 308 shows a compositional bias: polar residues; it reads SGLNRTSSQG. 4 ANK repeats span residues 349–380, 384–413, 419–448, and 456–485; these read NGNNLLHIAASQGHAECLQHLTSLMGEDCLNE, EKLTPAGLAIKNGQLECVRWMVSETEAIAE, DFPSLIHYAGCYGQEKILLWLLQFMQEQGI, and DGNSAVHVASQHGYLGCIQTLVEYGANVTM. Residues 515–552 adopt a coiled-coil conformation; sequence CMSLASQVVKLTKQLKEQTVERVTLQNQLQQFLEAQKS. Disordered regions lie at residues 549 to 615, 666 to 713, and 728 to 919; these read AQKS…KDED, RLRQ…SMDS, and SGGR…NKAA. The span at 555 to 571 shows a compositional bias: low complexity; it reads KSLPSSPSSPSSPASRK. One copy of the ANK 5 repeat lies at 603-632; sequence ASSRARPKAKDEDSDKILRQLLGKEISENV. A compositionally biased stretch (low complexity) spans 667 to 685; the sequence is LRQLMQRSLSESDTDSNNS. A compositionally biased stretch (basic and acidic residues) spans 686–700; that stretch reads EDPKTTPVRKADRPR. The stretch at 699–729 is one ANK 6 repeat; sequence PRPQPIVESVESMDSAESLHLMIKKHTLASG. Positions 774–785 are enriched in low complexity; it reads PSGDPQQPSPDS. The span at 833 to 842 shows a compositional bias: basic and acidic residues; sequence NGEKDKDKGR. The segment covering 844–854 has biased composition (polar residues); it reads LQRTSTSNESG. The segment covering 874 to 886 has biased composition (low complexity); the sequence is NQNNNNNYQAANQ.

Homodimer. Heterodimer of isoform 1 and isoform 2. Interacts with SIAH1, SIAH2, SNCA, RNF19A and PRKN. Isoform 2 has a strong tendency to form aggregates and can sequester isoform 1. In terms of processing, ubiquitinated; mediated by SIAH1, SIAH2 or RNF19A and leading to its subsequent proteasomal degradation. In the absence of proteasomal degradation, ubiquitinated SNCAIP accumulates in cytoplasmic inclusion bodies. Isoform 2 is subject to limited ubiquitination that does not lead to proteasomal degradation. Detected in brain (at protein level). Widely expressed, with highest levels in brain, heart and placenta.

The protein resides in the cytoplasm. Functionally, isoform 2 inhibits the ubiquitin ligase activity of SIAH1 and inhibits proteasomal degradation of target proteins. Isoform 2 inhibits autoubiquitination and proteasomal degradation of SIAH1, and thereby increases cellular levels of SIAH. Isoform 2 modulates SNCA monoubiquitination by SIAH1. The chain is Synphilin-1 (SNCAIP) from Homo sapiens (Human).